The sequence spans 1906 residues: Zinc metalloprotease ZmpB (1906 aa).

The N-terminal stretch at 1–33 is a signal peptide; sequence MFKKDRFSIRKIKGVVGSVFLGSLLMAPSVVDA. Positions 34–76 are excised as a propeptide; it reads ATYHYVNKEIISQEAKDLIQTGKPDRNEVVYGLVYQKDQLPQT. The LPXTG sorting signal signature appears at 73–77; it reads LPQTG. Pentaglycyl murein peptidoglycan amidated threonine is present on Thr-76. Helical transmembrane passes span 77 to 98 and 105 to 127; these read GTEASVLTAFGLLTVGSLLLIY and SVFLVGAMGLVVLPSAGAVDPVA. The Extracellular segment spans residues 128-1906; that stretch reads TLALASREGV…TNSFKTSIFK (1779 aa). The disordered stretch occupies residues 178 to 436; that stretch reads VETPQSITNQ…KASSVSPTDY (259 aa). Residues 181-196 are compositionally biased toward polar residues; sequence PQSITNQEQARTENQV. 5 stretches are compositionally biased toward basic and acidic residues: residues 201 to 239, 252 to 262, 271 to 335, 352 to 375, and 383 to 408; these read EAPKEEAPKTEESPKEEPKSEVKPTDDTLPKVEEGKEDS, VESKPEEKVAV, KPAE…KEET, KQTEPTEEPKVEQAGEPVAPREDE, and EPEKQPEVPEEEKAVEETPKPEDKIK. A run of 4 repeats spans residues 277 to 291, 293 to 315, 361 to 375, and 380 to 402. The interval 277–375 is 2 X 15 AA repeats of K-V-E-Q-A-G-E-P-V-A-P-R-E-D-E; that stretch reads KVEQAGEPVA…GEPVAPREDE (99 aa). Residues 293–375 are 2 X 23 AA approximate repeats; that stretch reads APVEPEKQPE…GEPVAPREDE (83 aa). Residues 421 to 436 are compositionally biased toward polar residues; the sequence is LNNQIDKASSVSPTDY. His-1562 is a binding site for Zn(2+). Glu-1563 is a catalytic residue. Residues His-1566 and Glu-1586 each coordinate Zn(2+).

The protein belongs to the peptidase M26 family. Zn(2+) serves as cofactor. Post-translationally, the Gram-positive cell-wall anchor motif LPXTG is located in the N-terminal part, in contrast to such motifs in other known streptococcal and staphylococcal proteins. The protease could be cleaved by the sortase and anchored in the membrane via the two potential N-terminal transmembrane domains, whereas the propeptide located prior to the LPXTG motif would remain attached to the cell wall peptidoglycan by an amide bond.

It localises to the secreted. It is found in the cell wall. Its subcellular location is the membrane. Its function is as follows. Is a virulence factor capable of inducing inflammation in the lower respiratory tract, by increasing tumor necrosis factor alpha (TNF-alpha) concentration in the lungs. Also appears to have other functions important in virulence in models of pneumonia and septicemia. This is Zinc metalloprotease ZmpB (zmpB) from Streptococcus pneumoniae serotype 4 (strain ATCC BAA-334 / TIGR4).